A 280-amino-acid chain; its full sequence is Diaminopimelate epimerase (280 aa).

Residues Asn13 and Asn67 each contribute to the substrate site. Cys76 serves as the catalytic Proton donor. Substrate-binding positions include Gly77 to Asn78, Asn191, and Glu208 to Arg209. The Proton acceptor role is filled by Cys218. A substrate-binding site is contributed by Gly219–Thr220.

Belongs to the diaminopimelate epimerase family. In terms of assembly, homodimer.

It is found in the cytoplasm. It catalyses the reaction (2S,6S)-2,6-diaminopimelate = meso-2,6-diaminopimelate. Its pathway is amino-acid biosynthesis; L-lysine biosynthesis via DAP pathway; DL-2,6-diaminopimelate from LL-2,6-diaminopimelate: step 1/1. In terms of biological role, catalyzes the stereoinversion of LL-2,6-diaminopimelate (L,L-DAP) to meso-diaminopimelate (meso-DAP), a precursor of L-lysine. This Archaeoglobus fulgidus (strain ATCC 49558 / DSM 4304 / JCM 9628 / NBRC 100126 / VC-16) protein is Diaminopimelate epimerase.